Reading from the N-terminus, the 138-residue chain is Acyl carrier protein 1, chloroplastic (138 aa).

The transit peptide at 1-56 directs the protein to the chloroplast; sequence MASLSATTTVRVQPSSSSLHKLSQGNGRCSSIVCLDWGKSSFPTLRTSRRRSFISA. Positions 59–134 constitute a Carrier domain; that stretch reads KETIDKVCDI…QAADVIESLL (76 aa). Serine 94 bears the O-(pantetheine 4'-phosphoryl)serine mark.

It belongs to the acyl carrier protein (ACP) family. 4'-phosphopantetheine is transferred from CoA to a specific serine of apo-ACP by acpS. This modification is essential for activity because fatty acids are bound in thioester linkage to the sulfhydryl of the prosthetic group.

It localises to the plastid. Its subcellular location is the chloroplast. Its pathway is lipid metabolism; fatty acid biosynthesis. Its function is as follows. Carrier of the growing fatty acid chain in fatty acid biosynthesis. This Spinacia oleracea (Spinach) protein is Acyl carrier protein 1, chloroplastic (ACL1.1).